Reading from the N-terminus, the 328-residue chain is C-type lectin domain family 11 member A (328 aa).

The N-terminal stretch at 1–21 (MQAAWLLGALLVPHLLSFGHG) is a signal peptide. Residues 58–111 (PTGVGNKDNLAENSEGKEVWEATETQGEEEEEETTTTPSSSPTPFPSPSPTSED) are disordered. One can recognise a C-type lectin domain in the interval 188 to 325 (LGHKCFLLSR…CERRLYFVCE (138 aa)). Disulfide bonds link cysteine 209–cysteine 324 and cysteine 301–cysteine 316.

Post-translationally, O-glycosylated. Probably sulfated on the O-glycans.

Its subcellular location is the cytoplasm. It localises to the secreted. Promotes osteogenesis by stimulating the differentiation of mesenchymal progenitors into mature osteoblasts. Important for repair and maintenance of adult bone. In Rattus norvegicus (Rat), this protein is C-type lectin domain family 11 member A (Clec11a).